The chain runs to 1136 residues: Protein stu-1 (1136 aa).

HEAT repeat units follow at residues 95 to 133 (TLPV…ERSV) and 167 to 205 (YVPT…KSDL). Disordered regions lie at residues 524-554 (KDPH…MGAP), 567-794 (RAMA…QPQI), and 821-884 (TAGQ…LLDS). Residues 595–622 (VSSTSQASVASASTASAVPAPTKSAFGA) show a composition bias toward low complexity. Residues 659–668 (PAEPASPPSK) are compositionally biased toward pro residues. Polar residues predominate over residues 673–683 (TVTSPKTQTLV). The span at 701–716 (SSESGIPIPVSGISSP) shows a compositional bias: low complexity. Polar residues-rich tracts occupy residues 777 to 793 (LPTQ…QQPQ) and 822 to 833 (AGQTQPQSTYTS).

It belongs to the CLASP family. As to quaternary structure, interacts with microtubules.

The protein resides in the nucleus. It is found in the cytoplasm. Its subcellular location is the cytoskeleton. It localises to the spindle. In terms of biological role, microtubule binding protein that promotes the stabilization of dynamic microtubules. Required for mitotic spindle formation. The chain is Protein stu-1 (stu-1) from Neurospora crassa (strain ATCC 24698 / 74-OR23-1A / CBS 708.71 / DSM 1257 / FGSC 987).